The sequence spans 410 residues: Peptidase T (410 aa).

Zn(2+) is bound at residue H79. D81 is a catalytic residue. D142 contacts Zn(2+). Residue E176 is the Proton acceptor of the active site. Zn(2+)-binding residues include E177, D199, and H381.

This sequence belongs to the peptidase M20B family. Zn(2+) serves as cofactor.

The protein resides in the cytoplasm. The enzyme catalyses Release of the N-terminal residue from a tripeptide.. Cleaves the N-terminal amino acid of tripeptides. In Bacillus licheniformis (strain ATCC 14580 / DSM 13 / JCM 2505 / CCUG 7422 / NBRC 12200 / NCIMB 9375 / NCTC 10341 / NRRL NRS-1264 / Gibson 46), this protein is Peptidase T.